A 219-amino-acid polypeptide reads, in one-letter code: Cytochrome b6 (219 aa).

The chain crosses the membrane as a helical span at residues 32-52 (IFYCFGGIVLTAFIFQGASGF). Cys35 is a heme c binding site. Positions 86 and 100 each coordinate heme b. The next 3 membrane-spanning stretches (helical) occupy residues 90–110 (SGCM…TGGF), 116–136 (LTWI…VTGY), and 190–210 (IHTF…FSLL). Heme b is bound by residues His191 and His206.

This sequence belongs to the cytochrome b family. PetB subfamily. The 4 large subunits of the cytochrome b6-f complex are cytochrome b6, subunit IV (17 kDa polypeptide, PetD), cytochrome f and the Rieske protein, while the 4 small subunits are PetG, PetL, PetM and PetN. The complex functions as a dimer. Heme b is required as a cofactor. The cofactor is heme c.

It localises to the plastid. The protein resides in the chloroplast thylakoid membrane. Its function is as follows. Component of the cytochrome b6-f complex, which mediates electron transfer between photosystem II (PSII) and photosystem I (PSI), cyclic electron flow around PSI, and state transitions. In Heterocapsa triquetra (Dinoflagellate), this protein is Cytochrome b6.